A 612-amino-acid polypeptide reads, in one-letter code: Rhamnogalacturonan exolyase YesX (612 aa).

N119 is a binding site for substrate. 6 residues coordinate Ca(2+): D120, D125, D127, D129, E131, and E133. The substrate site is built by D139, E154, and R174. Residues D189, D191, D193, K195, and E197 each contribute to the Ca(2+) site. Positions 205 and 222 each coordinate substrate. H330, D336, D338, D340, K342, E344, D353, H354, H366, D368, D374, D376, R379, G381, E383, and E389 together coordinate Ca(2+). Position 419 (R419) interacts with substrate. Residues D472, D474, V476, and E478 each contribute to the Ca(2+) site. N516–T518 serves as a coordination point for substrate. Ca(2+) contacts are provided by N527, F529, D531, R533, E535, N576, and A578. Substrate is bound at residue Y579. Ca(2+) is bound at residue N580.

The protein belongs to the polysaccharide lyase 11 family. Monomer. The cofactor is Mn(2+). Zn(2+) serves as cofactor. Requires Co(2+) as cofactor. Ca(2+) is required as a cofactor.

It is found in the secreted. It carries out the reaction Exotype eliminative cleavage of alpha-L-rhamnopyranosyl-(1-&gt;4)-alpha-D-galactopyranosyluronic acid bonds of rhamnogalacturonan I oligosaccharides containing alpha-L-rhamnopyranose at the reducing end and 4-deoxy-4,5-unsaturated D-galactopyranosyluronic acid at the non-reducing end. The products are the disaccharide 2-O-(4-deoxy-beta-L-threo-hex-4-enopyranuronosyl)-alpha-L-rhamnopyranose and the shortened rhamnogalacturonan oligosaccharide containing one 4-deoxy-4,5-unsaturated D-galactopyranosyluronic acid at the non-reducing end.. Its function is as follows. Pectinolytic enzyme that degrades type I rhamnogalacturonan from plant cell walls and releases disaccharide products. Degrades rhamnogalacturonan, polygalacturonic acid and pectic acid. Has very low activity on pectin. The protein is Rhamnogalacturonan exolyase YesX (yesX) of Bacillus subtilis (strain 168).